A 123-amino-acid polypeptide reads, in one-letter code: Integration host factor subunit alpha (123 aa).

A disordered region spans residues 97-123; that stretch reads NANGSAPSMSSSASAVDDDKSESASRT. Over residues 98 to 111 the composition is skewed to low complexity; the sequence is ANGSAPSMSSSASA. The span at 113-123 shows a compositional bias: basic and acidic residues; it reads DDDKSESASRT.

It belongs to the bacterial histone-like protein family. Heterodimer of an alpha and a beta chain.

In terms of biological role, this protein is one of the two subunits of integration host factor, a specific DNA-binding protein that functions in genetic recombination as well as in transcriptional and translational control. The chain is Integration host factor subunit alpha from Rhodopseudomonas palustris (strain BisB5).